The following is a 519-amino-acid chain: MKSKVVIFDTTLRDGEQALQASLSVKEKLQIALSLEKCGIDILEIGFPVSSPGDFKSVQTISKNIKNSRICSLARCIEKDIDAAGEAMSSSDSFRIHIFLATSTLHMESKLKKNFNEIIDMAVFSVKKALRYTDDIEFSCEDATRTTMDNLCRIVETLIKSGVKTINIPDTVGYTVPNELSCIIKNLFERVPNIHKSIISVHCHDDLGMAVGNSISAIQAGARQIEGTINGIGERAGNTALEEIIMAIKVREDILSVSTNINYKEIYRTSKIVSQICNMPIPSNKAIVGSNAFAHSSGIHQDGVLKNRKNYEIMEPSSIGLKEVKLNLTSRSGRAAVKHYMDEMGYNNSDYNIDELYTAFLKLADKKGQVFDYDLEALAFINKQQDEWEYFSLKFFSVQSISNSLSTASVKLLCGKKTYTESSTTSNGPVDAIYQALNRIACFPIILQKFQLVAKGKGKDALGQVDILVEHKKRKFHGVGLATDIIEASAQAMINVLNNIWKAKQVNKKLKILKDFKKK.

Positions 5–267 (VVIFDTTLRD…STNINYKEIY (263 aa)) constitute a Pyruvate carboxyltransferase domain. 4 residues coordinate Mn(2+): D14, H202, H204, and N238. Residues 392 to 519 (SLKFFSVQSI…LKILKDFKKK (128 aa)) are regulatory domain.

It belongs to the alpha-IPM synthase/homocitrate synthase family. LeuA type 1 subfamily. In terms of assembly, homodimer. Mn(2+) is required as a cofactor.

Its subcellular location is the cytoplasm. It carries out the reaction 3-methyl-2-oxobutanoate + acetyl-CoA + H2O = (2S)-2-isopropylmalate + CoA + H(+). The protein operates within amino-acid biosynthesis; L-leucine biosynthesis; L-leucine from 3-methyl-2-oxobutanoate: step 1/4. In terms of biological role, catalyzes the condensation of the acetyl group of acetyl-CoA with 3-methyl-2-oxobutanoate (2-ketoisovalerate) to form 3-carboxy-3-hydroxy-4-methylpentanoate (2-isopropylmalate). This is 2-isopropylmalate synthase from Buchnera aphidicola subsp. Acyrthosiphon pisum (strain APS) (Acyrthosiphon pisum symbiotic bacterium).